Reading from the N-terminus, the 221-residue chain is UPF0758 protein YicR (221 aa).

The MPN domain maps to 99–221 (ALLSPEMTLE…YVSFAERGWI (123 aa)). H170, H172, and D183 together coordinate Zn(2+). The JAMM motif motif lies at 170–183 (HNHPSGCAEPSKAD).

Belongs to the UPF0758 family. YicR subfamily.

This is UPF0758 protein YicR from Salmonella arizonae (strain ATCC BAA-731 / CDC346-86 / RSK2980).